The sequence spans 255 residues: Imidazole glycerol phosphate synthase subunit HisF (255 aa).

Residues Asp12 and Asp131 contribute to the active site.

Belongs to the HisA/HisF family. In terms of assembly, heterodimer of HisH and HisF.

It localises to the cytoplasm. It catalyses the reaction 5-[(5-phospho-1-deoxy-D-ribulos-1-ylimino)methylamino]-1-(5-phospho-beta-D-ribosyl)imidazole-4-carboxamide + L-glutamine = D-erythro-1-(imidazol-4-yl)glycerol 3-phosphate + 5-amino-1-(5-phospho-beta-D-ribosyl)imidazole-4-carboxamide + L-glutamate + H(+). It functions in the pathway amino-acid biosynthesis; L-histidine biosynthesis; L-histidine from 5-phospho-alpha-D-ribose 1-diphosphate: step 5/9. In terms of biological role, IGPS catalyzes the conversion of PRFAR and glutamine to IGP, AICAR and glutamate. The HisF subunit catalyzes the cyclization activity that produces IGP and AICAR from PRFAR using the ammonia provided by the HisH subunit. The protein is Imidazole glycerol phosphate synthase subunit HisF of Vesicomyosocius okutanii subsp. Calyptogena okutanii (strain HA).